Consider the following 490-residue polypeptide: GTPase Der (490 aa).

An EngA-type G 1 domain is found at 1–165 (MRIAILGRPN…RIRQVAEIPL (165 aa)). Residues 7 to 14 (GRPNVGKS), 54 to 58 (DTGGV), and 117 to 120 (NKAD) contribute to the GTP site. Residues 165–184 (LPSAEEQENTQEEEFSSKES) are disordered. The span at 169-178 (EEQENTQEEE) shows a compositional bias: acidic residues. The EngA-type G 2 domain occupies 227–400 (LKVALIGHPN…AVDDVYTIAT (174 aa)). Residues 233–240 (GHPNVGKS), 280–284 (DTAGL), and 345–348 (NKWD) contribute to the GTP site. The KH-like domain occupies 401–485 (TKLSTSLVNK…PFDLEYKAKP (85 aa)).

The protein belongs to the TRAFAC class TrmE-Era-EngA-EngB-Septin-like GTPase superfamily. EngA (Der) GTPase family. Associates with the 50S ribosomal subunit.

Its function is as follows. GTPase that plays an essential role in the late steps of ribosome biogenesis. This Chlamydia muridarum (strain MoPn / Nigg) protein is GTPase Der.